Here is a 331-residue protein sequence, read N- to C-terminus: N-acetyl-alpha-D-glucosaminyl-diphospho-ditrans,octacis-undecaprenol 4-epimerase (331 aa).

Residues 13–14 (FV), 34–39 (QQSHFY), 47–48 (DV), Ser-109, Tyr-132, and Lys-136 contribute to the NAD(+) site. Substrate contacts are provided by Ser-109 and Tyr-132. Tyr-132 (proton acceptor) is an active-site residue. Substrate contacts are provided by residues 183–184 (GK) and 199–201 (YVG).

It belongs to the NAD(P)-dependent epimerase/dehydratase family. The cofactor is NAD(+).

The protein resides in the cell membrane. The enzyme catalyses N-acetyl-alpha-D-glucosaminyl-di-trans,octa-cis-undecaprenyl diphosphate = N-acetyl-alpha-D-galactosaminyl-di-trans,octa-cis-undecaprenyl diphosphate. Its pathway is bacterial outer membrane biogenesis; LPS O-antigen biosynthesis. Functionally, involved in biosynthesis of the repeating tetrasaccharide unit of the O-antigen. Catalyzes the reversible epimerization of the hydroxyl group at position C4 of undecaprenyl pyrophosphate-N-acetylglucosamine (UndPP-GlcNAc) to yield undecaprenyl pyrophosphate-N-acetylgalactosamine (UndPP-GalNAc). This Escherichia coli O157:H7 protein is N-acetyl-alpha-D-glucosaminyl-diphospho-ditrans,octacis-undecaprenol 4-epimerase.